Reading from the N-terminus, the 350-residue chain is Solute carrier family 35 member E4 (350 aa).

Helical transmembrane passes span 40–60, 79–99, 110–130, 135–155, 218–238, 258–278, 279–299, and 301–321; these read VLGQPALARVVVAALVWLLAG, PLLLSALHMLAAAVACHWGAQ, VLLLSLTFGTSMACGNVGLST, LAQLATTTTPLFTLALSALLL, VTLLYATSLPSFCLLAGAALV, VLLSCFLSVVYNLASFSLLAL, TSALTVHVLGNLTVVGNLILS, and LLFGSHLSALSYVGIALTLSG. The region spanning 125 to 179 is the EamA domain; that stretch reads NVGLSTVPLDLAQLATTTTPLFTLALSALLLGRRHHPLQFAAMGPLCLGAACSLA.

The protein belongs to the TPT transporter family. SLC35E subfamily.

It is found in the membrane. Its function is as follows. Putative transporter. This chain is Solute carrier family 35 member E4 (Slc35e4), found in Rattus norvegicus (Rat).